The primary structure comprises 563 residues: Arginine--tRNA ligase (563 aa).

Positions 119 to 129 (ANPTGPLHVGR) match the 'HIGH' region motif.

This sequence belongs to the class-I aminoacyl-tRNA synthetase family.

The protein localises to the cytoplasm. It catalyses the reaction tRNA(Arg) + L-arginine + ATP = L-arginyl-tRNA(Arg) + AMP + diphosphate. This Methanocella arvoryzae (strain DSM 22066 / NBRC 105507 / MRE50) protein is Arginine--tRNA ligase.